The chain runs to 131 residues: MNDTVTIRTRKFMTNRLLQRKQMVIGVLHPGKATVPKTEIREKLAKMYKTTPDVIFVFGFRTHFGGGKTTGFGMIYDSLDYAKKNEPKHRLARHGLYEKKKTSRKQRKERKNRMKKVRGTAKANVGAGKKK.

M1 is subject to N-acetylmethionine. The residue at position 9 (T9) is a Phosphothreonine. K37 participates in a covalent cross-link: Glycyl lysine isopeptide (Lys-Gly) (interchain with G-Cter in SUMO2). The span at 90 to 100 (RLARHGLYEKK) shows a compositional bias: basic and acidic residues. Positions 90-131 (RLARHGLYEKKKTSRKQRKERKNRMKKVRGTAKANVGAGKKK) are disordered. The span at 101 to 119 (KTSRKQRKERKNRMKKVRG) shows a compositional bias: basic residues.

It belongs to the eukaryotic ribosomal protein eS24 family. Component of the small ribosomal subunit. Part of the small subunit (SSU) processome, composed of more than 70 proteins and the RNA chaperone small nucleolar RNA (snoRNA) U3.

It localises to the cytoplasm. It is found in the nucleus. Its subcellular location is the nucleolus. Functionally, component of the small ribosomal subunit. The ribosome is a large ribonucleoprotein complex responsible for the synthesis of proteins in the cell. Required for processing of pre-rRNA and maturation of 40S ribosomal subunits. Part of the small subunit (SSU) processome, first precursor of the small eukaryotic ribosomal subunit. During the assembly of the SSU processome in the nucleolus, many ribosome biogenesis factors, an RNA chaperone and ribosomal proteins associate with the nascent pre-rRNA and work in concert to generate RNA folding, modifications, rearrangements and cleavage as well as targeted degradation of pre-ribosomal RNA by the RNA exosome. The protein is Small ribosomal subunit protein eS24 (RPS24) of Macaca fascicularis (Crab-eating macaque).